The primary structure comprises 493 residues: Cobyric acid synthase (493 aa).

In terms of domain architecture, GATase cobBQ-type spans 252-441 (DLKITVIRLP…LHGLLENGPW (190 aa)). Residue Cys-333 is the Nucleophile of the active site. His-433 is an active-site residue.

Belongs to the CobB/CobQ family. CobQ subfamily.

It participates in cofactor biosynthesis; adenosylcobalamin biosynthesis. In terms of biological role, catalyzes amidations at positions B, D, E, and G on adenosylcobyrinic A,C-diamide. NH(2) groups are provided by glutamine, and one molecule of ATP is hydrogenolyzed for each amidation. The chain is Cobyric acid synthase from Thermosynechococcus vestitus (strain NIES-2133 / IAM M-273 / BP-1).